We begin with the raw amino-acid sequence, 255 residues long: tRNA pseudouridine synthase A (255 aa).

The Nucleophile role is filled by Asp56. Residue Tyr114 coordinates substrate.

Belongs to the tRNA pseudouridine synthase TruA family. Homodimer.

The enzyme catalyses uridine(38/39/40) in tRNA = pseudouridine(38/39/40) in tRNA. Functionally, formation of pseudouridine at positions 38, 39 and 40 in the anticodon stem and loop of transfer RNAs. This is tRNA pseudouridine synthase A from Methylacidiphilum infernorum (isolate V4) (Methylokorus infernorum (strain V4)).